Here is a 434-residue protein sequence, read N- to C-terminus: Prenyltransferase fogH (434 aa).

Residue Glu86 coordinates L-tryptophan. Substrate is bound by residues Arg101, Arg248, Lys250, Tyr252, and Tyr346.

It belongs to the tryptophan dimethylallyltransferase family.

Its pathway is secondary metabolite biosynthesis. Prenyltransferase; part of the gene cluster that mediates the biosynthesis of flavoglaucin and congeners (including aspergin, dihydroauroglaucin and auroglaucin), prenylated salicylaldehyde derivatives carrying a saturated or an unsaturated C-7 side chain. The PKS fogA releases the carboxylic acid (8E,10E,12E)-3,5,7-trihydroxytetradeca-8,10,12-trienoic acid as its product, as well as derivatives with one and two double bonds. FogA is indeed able to reduce the initial triketide, thus being at least partially responsible for the differently saturated heptyl side chains of flavoglaucin congeners. The oxidoreductases fogB, fogC and fogD modify the nascent polyketide in fogA-bound form and, together, fogA, fogB, fogC and fogD are necessary for the formation of the aromatic core and the cyclized PKS products are released as salicyl alcohols. In particular, fogB is responsible for oxidation of a hydroxyl group or reduction of remaining double bond(s) at the C-7 residue whereas fogD is probably involved in the reductive release of the modified PKS products. The cytochrome P450 monooxygenase fogE is then responsible for the hydroxylation at C-3 of the benzene ring. The fogE products are substrates of the prenyltransferase fogH and the prenylated benzyl alcohols are subsequently oxidized by the fogF to produce the final aryl aldehydes flavoglaucin and congeners. The short-chain dehydrogenase fogG does not seem to be involved in the biosynthesis of the prenylated salicylaldehyde derivatives. The chain is Prenyltransferase fogH from Aspergillus ruber (strain CBS 135680).